Here is a 74-residue protein sequence, read N- to C-terminus: Major structural pilin EpdE (74 aa).

Residues 1-12 (MKFLEKLTSKKG) constitute a propeptide that is removed on maturation. A Pyrrolidone carboxylic acid modification is found at Q13. Positions 13 to 21 (QIAMELGIL) match the QXSXEXXXL motif.

The N-terminus is cleaved by the prepilin peptidase EppA, which recognizes the class III signal sequence. Post-translationally, N-glycosylated. Glycosylated with an N-linked branched pentasaccharide glycan. May contain glycans at three sites. Glycosylation is AglB-dependent. The N-glycosylation does not occur unless the signal peptide has been cleaved first.

The protein localises to the secreted. It localises to the cell surface. Its subcellular location is the fimbrium. In terms of biological role, major component of the type IV-like pili. This Methanococcus maripaludis (strain DSM 14266 / JCM 13030 / NBRC 101832 / S2 / LL) protein is Major structural pilin EpdE.